Consider the following 198-residue polypeptide: Endonuclease V (198 aa).

2 residues coordinate Mg(2+): D38 and D101.

This sequence belongs to the endonuclease V family. The cofactor is Mg(2+).

It is found in the cytoplasm. It carries out the reaction Endonucleolytic cleavage at apurinic or apyrimidinic sites to products with a 5'-phosphate.. DNA repair enzyme involved in the repair of deaminated bases. Selectively cleaves double-stranded DNA at the second phosphodiester bond 3' to a deoxyinosine leaving behind the intact lesion on the nicked DNA. This is Endonuclease V from Saccharolobus islandicus (strain Y.N.15.51 / Yellowstone #2) (Sulfolobus islandicus).